Here is a 424-residue protein sequence, read N- to C-terminus: Tyrosine--tRNA ligase (424 aa).

Y37 serves as a coordination point for L-tyrosine. The 'HIGH' region motif lies at 42–51; sequence PTADSLHLGH. Positions 175 and 179 each coordinate L-tyrosine. The short motif at 235 to 239 is the 'KMSKS' region element; sequence KFGKT. K238 contacts ATP. The 58-residue stretch at 357 to 414 folds into the S4 RNA-binding domain; that stretch reads ADLMQALVDAELQPSRGQARKTIASNAVTINGEKQSDPEYIFNDEDRLFGRYTLLRRG.

Belongs to the class-I aminoacyl-tRNA synthetase family. TyrS type 1 subfamily. Homodimer.

The protein localises to the cytoplasm. It catalyses the reaction tRNA(Tyr) + L-tyrosine + ATP = L-tyrosyl-tRNA(Tyr) + AMP + diphosphate + H(+). Its function is as follows. Catalyzes the attachment of tyrosine to tRNA(Tyr) in a two-step reaction: tyrosine is first activated by ATP to form Tyr-AMP and then transferred to the acceptor end of tRNA(Tyr). The chain is Tyrosine--tRNA ligase from Salmonella agona (strain SL483).